An 866-amino-acid chain; its full sequence is Autophagy-related protein 9 (866 aa).

At 1-94 (MMSSGHKGPN…KGLWCIIVKW (94 aa)) the chain is on the cytoplasmic side. A helical membrane pass occupies residues 95–115 (AVELLSLGFIICFSGFFLLYV). Over 116–153 (DWNGLQNAKCGMDAVESGTKPCDLVKEAIHPHPLSPFT) the chain is Lumenal. Residues 154–174 (LTTAIIVGYLALFSVYWLFCF) traverse the membrane as a helical segment. The Cytoplasmic portion of the chain corresponds to 175 to 319 (LRFFAQLKDT…VSNPTTLKKR (145 aa)). Residues 320 to 340 (LFVVGLAMLLLSPFLVIFMLV) lie within the membrane without spanning it. Residues 341–404 (YLFLRHAEQF…LKQFPSPIIS (64 aa)) lie on the Cytoplasmic side of the membrane. Residues 405–425 (IIAKFVSFVSGGFAAVLIIIA) traverse the membrane as a helical segment. At 426–433 (FLEESLLE) the chain is on the lumenal side. Residues 434 to 454 (GHIFGRNLFWYAAVFGTITAI) form a helical membrane-spanning segment. Residues 455–507 (SRAAISDELLVLDPVGTMSLVVQNTHYMPKRWRGKENKDDVRLELETLFQYTG) are Cytoplasmic-facing. The stretch at 508 to 528 (MMLLEEIASIFITPFLLMFVV) is an intramembrane region. Residues 529-866 (PKRVDDILQF…ETSTSSTTLR (338 aa)) lie on the Cytoplasmic side of the membrane. The tract at residues 744–781 (QPEGEDSYGSQHPLDGRNQWWGRGNHSQISTAHPATTN) is disordered. The segment covering 768–781 (NHSQISTAHPATTN) has biased composition (polar residues).

The protein belongs to the ATG9 family. Homotrimer; forms a homotrimer with a central pore that forms a path between the two membrane leaflets. As to expression, expressed in roots, leaves, stems and flowers.

The protein localises to the preautophagosomal structure membrane. In terms of biological role, phospholipid scramblase involved in autophagy by mediating autophagosomal membrane expansion. Cycles between the preautophagosomal structure/phagophore assembly site (PAS) and the cytoplasmic vesicle pool and supplies membrane for the growing autophagosome. Lipid scramblase activity plays a key role in preautophagosomal structure/phagophore assembly by distributing the phospholipids that arrive through ATG2 from the cytoplasmic to the luminal leaflet of the bilayer, thereby driving autophagosomal membrane expansion. In addition to autophagy, also plays a role in necrotic cell death. Plays an essential role in plant nutrient recycling. This is Autophagy-related protein 9 from Arabidopsis thaliana (Mouse-ear cress).